Here is a 378-residue protein sequence, read N- to C-terminus: Putative odorant receptor 71a (378 aa).

The Cytoplasmic segment spans residues 1-37; that stretch reads MDYDRIRPVRFLTGVLKWWRLWPRKESVSTPDWTNWQ. The chain crosses the membrane as a helical span at residues 38-58; that stretch reads AYALHVPFTFLFVLLLWLEAI. The Extracellular segment spans residues 59–66; it reads KSRDIQHT. A helical transmembrane segment spans residues 67 to 87; sequence ADVLLICLTTTALGGKVINIW. Residues 88–127 are Cytoplasmic-facing; it reads KYAHVAQGILSEWSTWDLFELRSKQEVDMWRFEHRRFNRV. A helical transmembrane segment spans residues 128–148; it reads FMFYCLCSAGVIPFIVIQPLF. Over 149-166 the chain is Extracellular; it reads DIPNRLPFWMWTPFDWQQ. A helical transmembrane segment spans residues 167–187; it reads PVLFWYAFIYQATTIPIACAC. Over 188-255 the chain is Cytoplasmic; the sequence is NVTMDAVNWY…IFISKSTFTQ (68 aa). A helical membrane pass occupies residues 256 to 276; it reads ILVSSLIICFTIYSMQMSPVL. Residues 277–280 lie on the Extracellular side of the membrane; it reads QDLP. Residues 281 to 301 traverse the membrane as a helical segment; sequence GFAAMMQYLVAMIMQVMLPTI. Over 302–343 the chain is Cytoplasmic; it reads YGNAVIDSANMLTDSMYNSDWPDMNCRMRRLVLMFMVYLNRP. Residues 344–364 form a helical membrane-spanning segment; it reads VTLKAGGFFHIGLPLFTKTMN. Over 365–378 the chain is Extracellular; that stretch reads QAYSLLALLLNMNQ.

It belongs to the insect chemoreceptor superfamily. Heteromeric odorant receptor channel (TC 1.A.69) family. Or2a subfamily. In terms of assembly, interacts with Orco. Complexes exist early in the endomembrane system in olfactory sensory neurons (OSNs), coupling these complexes to the conserved ciliary trafficking pathway. In terms of tissue distribution, expressed in olfactory sensory neurons in the maxillary palp.

The protein resides in the cell membrane. In terms of biological role, odorant receptor which mediates acceptance or avoidance behavior, depending on its substrates. The odorant receptor repertoire encodes a large collection of odor stimuli that vary widely in identity, intensity, and duration. May form a complex with Orco to form odorant-sensing units, providing sensitive and prolonged odorant signaling and calcium permeability. This Drosophila melanogaster (Fruit fly) protein is Putative odorant receptor 71a (Or71a).